Reading from the N-terminus, the 1622-residue chain is Ferredoxin-dependent glutamate synthase 1, chloroplastic/mitochondrial (1622 aa).

A chloroplast and mitochondrion-targeting transit peptide spans 1-105 (MAMQSLSPVP…LEDILSERGA (105 aa)). Catalysis depends on Cys-106, which acts as the For GATase activity. The region spanning 106 to 505 (CGVGFIANLD…PGMMIAVDLV (400 aa)) is the Glutamine amidotransferase type-2 domain. FMN is bound at residue 1184–1241 (LTETHQTLIANGLRERVILRVDGGLKSGVDVLMAAAMGADEYGFGSLAMIATGCVMAR). Cys-1237, Cys-1243, and Cys-1248 together coordinate [3Fe-4S] cluster.

The protein belongs to the glutamate synthase family. As to quaternary structure, interacts with SHM1. The cofactor is [3Fe-4S] cluster. Requires FAD as cofactor. It depends on FMN as a cofactor. In terms of tissue distribution, highly expressed in leaves. High expression in the leaf mesophyll and phloem companion cell-sieve element complex.

It is found in the plastid. The protein resides in the chloroplast stroma. It localises to the mitochondrion matrix. The catalysed reaction is 2 oxidized [2Fe-2S]-[ferredoxin] + 2 L-glutamate = L-glutamine + 2 reduced [2Fe-2S]-[ferredoxin] + 2-oxoglutarate + 2 H(+). It functions in the pathway amino-acid biosynthesis; L-glutamate biosynthesis via GLT pathway; L-glutamate from 2-oxoglutarate and L-glutamine (ferredoxin route): step 1/1. Its pathway is energy metabolism; nitrogen metabolism. Functionally, involved in glutamate biosynthesis in leaf. Required for the reassimilation of ammonium ions generated during photorespiration. The sequence is that of Ferredoxin-dependent glutamate synthase 1, chloroplastic/mitochondrial from Arabidopsis thaliana (Mouse-ear cress).